The primary structure comprises 448 residues: Adenylosuccinate synthetase (448 aa).

Residues G36–K42 and G64–T66 contribute to the GTP site. The Proton acceptor role is filled by D37. 2 residues coordinate Mg(2+): D37 and G64. Residues D37–K40, N62–H65, T154, R168, N246, T261, and R325 contribute to the IMP site. The active-site Proton donor is H65. V321–R327 contacts substrate. Residues R327, K353 to D355, and G436 to G438 contribute to the GTP site.

Belongs to the adenylosuccinate synthetase family. In terms of assembly, homodimer. It depends on Mg(2+) as a cofactor.

It is found in the cytoplasm. It carries out the reaction IMP + L-aspartate + GTP = N(6)-(1,2-dicarboxyethyl)-AMP + GDP + phosphate + 2 H(+). Its pathway is purine metabolism; AMP biosynthesis via de novo pathway; AMP from IMP: step 1/2. Functionally, plays an important role in the de novo pathway and in the salvage pathway of purine nucleotide biosynthesis. Catalyzes the first committed step in the biosynthesis of AMP from IMP. This chain is Adenylosuccinate synthetase, found in Drosophila persimilis (Fruit fly).